A 434-amino-acid chain; its full sequence is Evolutionarily conserved signaling intermediate in Toll pathway, mitochondrial (434 aa).

Residues 1–48 (MSWVQVNLLARGLSRGWGSICRTVLSGTPFAQPSLQARGLHCSAVTHK) constitute a mitochondrion transit peptide. K371 is covalently cross-linked (Glycyl lysine isopeptide (Lys-Gly) (interchain with G-Cter in ubiquitin)). Residues 403 to 434 (TRLEGQSPPHSPPKGPEEDDEAIQAQQRQGQS) form a disordered region.

This sequence belongs to the ECSIT family. In terms of assembly, interacts with MAP3K1, SMAD4 and TRAF6. Interacts with SMAD1 only after BMP4-treatment. Part of the mitochondrial complex I assembly/MCIA complex that comprises at least the core subunits TMEM126B, NDUFAF1, ECSIT and ACAD9 and complement subunits such as COA1 and TMEM186. Interacts with NDUFAF1. Interacts with ACAD9. Interacts with TRIM59. Interacts with TMEM70 and TMEM242. Interacts (when ubiquitinated) with NF-kappa-B subunits RELA and NFKB1. Interacts with RIGI, IFIT1 and MAVS; these interactions promote RLR-mediated type I IFN induction. Interacts with SQSTM1; this interaction inhibits TLR4 signaling via functional regulation of the TRAF6-ECSIT complex. Interacts with cereblon/CRBN; this interaction inhibits the ubiquitination of ECSIT. Ubiquitinated on Lys-371; leading to translocation in the nucleus together with RELA and NFKB1 and expression of NF-kappa-B-dependent genes.

The protein localises to the cytoplasm. It is found in the nucleus. It localises to the mitochondrion. Its function is as follows. Adapter protein that plays a role in different signaling pathways including TLRs and IL-1 pathways or innate antiviral induction signaling. Plays a role in the activation of NF-kappa-B by forming a signal complex with TRAF6 and TAK1/MAP3K7 to activate TAK1/MAP3K7 leading to activation of IKKs. Once ubiquitinated, interacts with the dissociated RELA and NFKB1 proteins and translocates to the nucleus where it induces NF-kappa-B-dependent gene expression. Plays a role in innate antiviral immune response by bridging the pattern recognition receptors RIGI and MDA5/IFIT1 to the MAVS complex at the mitochondrion. Promotes proteolytic activation of MAP3K1. Involved in the BMP signaling pathway. Required for normal embryonic development. In terms of biological role, as part of the MCIA complex, involved in the assembly of the mitochondrial complex I. This chain is Evolutionarily conserved signaling intermediate in Toll pathway, mitochondrial, found in Rattus norvegicus (Rat).